We begin with the raw amino-acid sequence, 100 residues long: UPF0235 protein TC_0667 (100 aa).

It belongs to the UPF0235 family.

The protein is UPF0235 protein TC_0667 of Chlamydia muridarum (strain MoPn / Nigg).